The sequence spans 841 residues: Beta-adaptin-like protein A (841 aa).

Disordered stretches follow at residues M1–L25 and D650–S671. Polar residues-rich tracts occupy residues R9–L25 and G654–S671.

Belongs to the adaptor complexes large subunit family. Adaptor protein complexes are heterotetramers composed of two large adaptins (beta-type subunit and alpha-type or delta-type or epsilon-type or gamma-type subunit), a medium adaptin (mu-type subunit) and a small adaptin (sigma-type subunit). Interacts with AHK2.

The protein resides in the golgi apparatus. The protein localises to the trans-Golgi network. It localises to the cytoplasmic vesicle. It is found in the clathrin-coated vesicle membrane. Functionally, subunit of clathrin-associated adaptor protein complex that plays a role in protein sorting in the late-Golgi/trans-Golgi network (TGN) and/or endosomes. The AP complexes mediate both the recruitment of clathrin to membranes and the recognition of sorting signals within the cytosolic tails of transmembrane cargo molecules. The polypeptide is Beta-adaptin-like protein A (BETAA-AD) (Arabidopsis thaliana (Mouse-ear cress)).